The following is a 430-amino-acid chain: 3-oxo-tetronate kinase (430 aa).

ATP-binding positions include Ser268, 366–369 (GGET), and Gly410.

Belongs to the four-carbon acid sugar kinase family.

The enzyme catalyses 3-dehydro-L-erythronate + ATP = 3-dehydro-4-O-phospho-L-erythronate + ADP + H(+). The catalysed reaction is 3-dehydro-D-erythronate + ATP = 3-dehydro-4-O-phospho-D-erythronate + ADP + H(+). Its function is as follows. Catalyzes the ATP-dependent phosphorylation of 3-oxo-tetronate to 3-oxo-tetronate 4-phosphate. The protein is 3-oxo-tetronate kinase of Pseudomonas fluorescens (strain ATCC BAA-477 / NRRL B-23932 / Pf-5).